The chain runs to 89 residues: Small ribosomal subunit protein bS16 (89 aa).

It belongs to the bacterial ribosomal protein bS16 family.

This is Small ribosomal subunit protein bS16 from Anaplasma marginale (strain Florida).